The primary structure comprises 512 residues: Histidine ammonia-lyase (512 aa).

The 5-imidazolinone (Ala-Gly) cross-link spans 145-147 (ASG). A 2,3-didehydroalanine (Ser) modification is found at serine 146.

The protein belongs to the PAL/histidase family. In terms of processing, contains an active site 4-methylidene-imidazol-5-one (MIO), which is formed autocatalytically by cyclization and dehydration of residues Ala-Ser-Gly.

The protein localises to the cytoplasm. It catalyses the reaction L-histidine = trans-urocanate + NH4(+). Its pathway is amino-acid degradation; L-histidine degradation into L-glutamate; N-formimidoyl-L-glutamate from L-histidine: step 1/3. This chain is Histidine ammonia-lyase, found in Pseudomonas fluorescens (strain SBW25).